The primary structure comprises 413 residues: GTPase HflX (413 aa).

A Hflx-type G domain is found at 200 to 386; sequence VRVALVGYTN…KVYETVREIH (187 aa). GTP-binding positions include 206–213, 231–235, 252–255, 318–321, and 364–366; these read GYTNVGKS, FATLD, DTVG, NKID, and SAT. 2 residues coordinate Mg(2+): serine 213 and threonine 233.

This sequence belongs to the TRAFAC class OBG-HflX-like GTPase superfamily. HflX GTPase family. Monomer. Associates with the 50S ribosomal subunit. Requires Mg(2+) as cofactor.

The protein resides in the cytoplasm. GTPase that associates with the 50S ribosomal subunit and may have a role during protein synthesis or ribosome biogenesis. The protein is GTPase HflX of Flavobacterium psychrophilum (strain ATCC 49511 / DSM 21280 / CIP 103535 / JIP02/86).